The primary structure comprises 513 residues: Zinc finger protein RFP (513 aa).

An RING-type zinc finger spans residues 16–57 (CPVCLQYFAEPMMLDCGHNICCACLARCWGTAETNVSCPQCR). The Zn(2+) site is built by Cys96, His99, Cys118, and His124. The segment at 96-127 (CEKHREPLKLYCEEDQMPICVVCDRSREHRGH) adopts a B box-type zinc-finger fold. Coiled coils occupy residues 132-172 (LEEA…AELL) and 282-311 (QKCLFLTESLKQFTEKMQSDMEKIQELREA). The 195-residue stretch at 298 to 492 (MQSDMEKIQE…SAAPLIICPM (195 aa)) folds into the B30.2/SPRY domain.

Belongs to the TRIM/RBCC family. As to quaternary structure, homomultimerizes. Part of a complex consisting of TRIM27, USP7 and MAGEL2; directly interacts with USP7. Interacts with PML, EIF3S6, EPC1, CHD4 and EID1. Interacts with MAGED4, MAGEF1 and MAGEL2. Interacts with PTPN11. Interacts with autophagy receptor p62/SQSTM1. (Microbial infection) Interacts with M.tuberculosis PtpA, whick blocks TRIM27-promoted JNK/p38 MAPK pathway activation and cell apoptosis. In terms of assembly, (Microbial infection) Interacts with herpes simplex virus protein ICP0. As to expression, expressed in testis namely within the seminiferous tubules.

The protein localises to the nucleus. It localises to the cytoplasm. It is found in the PML body. Its subcellular location is the early endosome. The protein resides in the mitochondrion. The enzyme catalyses S-ubiquitinyl-[E2 ubiquitin-conjugating enzyme]-L-cysteine + [acceptor protein]-L-lysine = [E2 ubiquitin-conjugating enzyme]-L-cysteine + N(6)-ubiquitinyl-[acceptor protein]-L-lysine.. The protein operates within protein modification; protein ubiquitination. E3 ubiquitin-protein ligase that mediates ubiquitination of various substrates and thereby plays a role in diffent processes including proliferation, innate immunity, apoptosis, immune response or autophagy. Ubiquitinates PIK3C2B and inhibits its activity by mediating the formation of 'Lys-48'-linked polyubiquitin chains; the function inhibits CD4 T-cell activation. Acts as a regulator of retrograde transport: together with MAGEL2, mediates the formation of 'Lys-63'-linked polyubiquitin chains at 'Lys-220' of WASHC1, leading to promote endosomal F-actin assembly. Has a transcriptional repressor activity by cooperating with EPC1. Induces apoptosis by activating Jun N-terminal kinase and p38 kinase and also increases caspase-3-like activity independently of mitochondrial events. May function in male germ cell development. Has DNA-binding activity and preferentially bound to double-stranded DNA. Forms a complex with and ubiquitinates the ubiquitin-specific protease USP7, which in turn deubiquitinates RIPK1 resulting in the positive regulation of TNF-alpha-induced apoptosis. In addition, acts with USP7 or PTPN11 as an inhibitor of the antiviral signaling pathway by promoting kinase TBK1 ubiquitination and degradation. Acts as a negative regulator of NOD2 signaling by mediating ubiquitination of NOD2, promoting its degradation by the proteasome. Alternatively, facilitates mitophagy via stabilization of active TBK1. Negatively regulates autophagy flux under basal conditions by directly polyubiquitinating ULK1. During starvation-induced autophagy, catalyzes non-degradative ubiquitination of the kinase STK38L promoting its activation and phosphorylation of ULK1 leading to its ubiquitination and degradation to restrain the amplitude and duration of autophagy. Functionally, (Microbial infection) Positively regulates hepatitis C virus replication by suppressing type I IFN response during infection. This Homo sapiens (Human) protein is Zinc finger protein RFP.